Here is a 262-residue protein sequence, read N- to C-terminus: Indole-3-glycerol phosphate synthase (262 aa).

It belongs to the TrpC family.

It carries out the reaction 1-(2-carboxyphenylamino)-1-deoxy-D-ribulose 5-phosphate + H(+) = (1S,2R)-1-C-(indol-3-yl)glycerol 3-phosphate + CO2 + H2O. Its pathway is amino-acid biosynthesis; L-tryptophan biosynthesis; L-tryptophan from chorismate: step 4/5. The sequence is that of Indole-3-glycerol phosphate synthase from Bordetella petrii (strain ATCC BAA-461 / DSM 12804 / CCUG 43448).